Consider the following 307-residue polypeptide: Upstream stimulatory factor 1 (307 aa).

2 disordered regions span residues 104-131 (DDNG…SVGG) and 168-207 (QGGS…VERR). The segment covering 122 to 131 (PTDSSTSVGG) has biased composition (low complexity). Basic and acidic residues predominate over residues 187 to 207 (DGPRTTRDDKRRAQHNEVERR). The bHLH domain maps to 196 to 251 (KRRAQHNEVERRRRDKINNWIVQLSKIIPDCSMESTKTGQSKGGILSKACDYIQEL). The leucine-zipper stretch occupies residues 268–289 (LQMDNEVLRQQVEDLKNNNLTL).

In terms of assembly, efficient DNA binding requires dimerization with another bHLH protein. Binds DNA as a homodimer or a heterodimer. As to expression, oocyte and somatic tissue. Oocytic and somatic forms of this protein exist, probably as a result of post-translational modifications or minor splicing differences.

It is found in the nucleus. Functionally, may act as a regulator of transcription factor IIIA (TFIIIA) gene expression. This Xenopus borealis (Kenyan clawed frog) protein is Upstream stimulatory factor 1 (usf1).